Reading from the N-terminus, the 539-residue chain is DNA damage-binding protein CMR1 (539 aa).

The disordered stretch occupies residues 22-89; that stretch reads LNLPTEAKKE…ALKQEDLGGS (68 aa). Positions 27-39 are enriched in basic and acidic residues; sequence EAKKESVDPEVAP. WD repeat units lie at residues 182-223, 226-268, 316-356, 377-415, 462-505, and 508-539; these read VTKE…EPLQ, LHHA…DVLD, LGEK…TART, NSRL…LDML, GRWV…LAHL, and ALMT…YWWE.

This sequence belongs to the WD repeat DDB2/WDR76 family.

DNA-binding protein that binds to both single- and double-stranded DNA. Binds preferentially to UV-damaged DNA. May be involved in DNA-metabolic processes. The protein is DNA damage-binding protein CMR1 of Yarrowia lipolytica (strain CLIB 122 / E 150) (Yeast).